The following is a 908-amino-acid chain: 26S proteasome non-ATPase regulatory subunit 2 (908 aa).

Met1 carries the post-translational modification N-acetylmethionine. The disordered stretch occupies residues 1–52; it reads MEEGGRDKAPVQPQQSPAAALGGTDEKPSGKERRDAGDKDKEQELSEEDKQL. Positions 10–20 are enriched in low complexity; that stretch reads PVQPQQSPAAA. Phosphoserine is present on Ser16. The residue at position 24 (Thr24) is a Phosphothreonine. The span at 24–52 shows a compositional bias: basic and acidic residues; that stretch reads TDEKPSGKERRDAGDKDKEQELSEEDKQL. Residues Ser29 and Ser147 each carry the phosphoserine modification. Tyr194 bears the Phosphotyrosine mark. Phosphoserine is present on residues Ser361 and Ser363. 5 PC repeats span residues 409–442, 443–479, 480–514, 517–551, and 560–589; these read SAAASLGMILLWDVDGGLTQIDKYLYSSEDYIKS, GALLACGIVNSGVRNECDPALALLSDYVLHNSNTMRL, GSIFGLGLAYAGSNREDVLTLLLPVMGDSKSSMEV, VTALACGMIAVGSCNGDVTSTILQTIMEKSETELK, and LGLGLNHLGKGEAIEAILAALEVVSEPFRS. Lys551 is modified (N6-acetyllysine). Positions 623–643 are enriched in basic and acidic residues; it reads KEKEEDKDKKEKKDKDKKEAP. The tract at residues 623-645 is disordered; sequence KEKEEDKDKKEKKDKDKKEAPAD. 2 PC repeats span residues 692–723 and 742–757; these read LALALISVSNPRLNILDTLSKFSHDADPEVSY and AAMLRQLAQYHAKDPN. The segment at 708-903 is required for interaction with UBLCP1; sequence DTLSKFSHDA…LEGFVILRKN (196 aa).

Belongs to the proteasome subunit S2 family. In terms of assembly, component of the 19S proteasome regulatory particle complex. The 26S proteasome consists of a 20S core particle (CP) and two 19S regulatory subunits (RP). The regulatory particle is made of a lid composed of 9 subunits, a base containing 6 ATPases and few additional components including PSMD2. Interacts with RPGRIP1L. Interacts with CRY1 in a KDM8-dependent manner. Interacts (via C-terminus) with phosphatase UBLCP1 (via ubiquitin-like domain); the interaction recruits UBLCP1 to the 19S regulatory particle where it dephosphorylates 19S subunit PSMC2/RPT1 which impairs PSMC2 ATPase activity and disrupts 26S proteasome assembly.

Component of the 26S proteasome, a multiprotein complex involved in the ATP-dependent degradation of ubiquitinated proteins. This complex plays a key role in the maintenance of protein homeostasis by removing misfolded or damaged proteins, which could impair cellular functions, and by removing proteins whose functions are no longer required. Therefore, the proteasome participates in numerous cellular processes, including cell cycle progression, apoptosis, or DNA damage repair. Its function is as follows. Binds to the intracellular domain of tumor necrosis factor type 1 receptor. The binding domain of TRAP1 and TRAP2 resides outside the death domain of TNFR1. The protein is 26S proteasome non-ATPase regulatory subunit 2 (PSMD2) of Pongo abelii (Sumatran orangutan).